Consider the following 301-residue polypeptide: Syntaxin-17 (301 aa).

The residue at position 2 (Ser-2) is an N-acetylserine. At 2-227 (SEDEEKVKLR…KNLQKAAKYK (226 aa)) the chain is on the cytoplasmic side. Lys-41 is modified (N6-acetyllysine). Positions 49 to 128 (DKLHEEHINA…QVNDEELLQP (80 aa)) form a coiled coil. Tyr-156 carries the phosphotyrosine; by ABL1 modification. Residues 161 to 223 (IPQDQNAAES…EEGTKNLQKA (63 aa)) enclose the t-SNARE coiled-coil homology domain. The chain crosses the membrane as a helical span at residues 228–248 (LAALPVAGALIGGVVGGPIGL). The interval 228-274 (LAALPVAGALIGGVVGGPIGLLAGFKVAGIAAALGGGVLGFTGGKLI) is necessary and sufficient for localization to autophagosome. Topologically, residues 249 to 253 (LAGFK) are lumenal. A helical membrane pass occupies residues 254 to 274 (VAGIAAALGGGVLGFTGGKLI). Residues 275 to 301 (QRRKQKMMEKLTSSCPDLPSQSDKKRS) are Cytoplasmic-facing. At Ser-288 the chain carries Phosphoserine. An Endoplasmic reticulum retention signal motif is present at residues 298-301 (KKRS).

This sequence belongs to the syntaxin family. Forms a SNARE complex composed of VAMP8, SNAP29 and STX17 involved in fusion of autophagosome with lysosome. May interact with VTI1B. Probably interacts with BET1, SCFD1 and SEC22B. Interacts with PTPN2 and ABL1; involved in STX17 phosphorylation. Interacts with COPB1. Interacts with TMED9 and TMED10; the interaction is direct. Interacts with VAMP7. Interacts with RUBCNL/PACER; promoting targeting of RUBCNL/PACER to autophagosome. Interacts with VAMP8, SNAP29, VPS39 and VPS41; these interactions are increased in the absence of TMEM39A. Interacts with IRGM; promoting STX17 recruitment to autophagosomes. Interacts with ATG8 proteins GABARAP and MAP1LC3B. Interacts with RNF115; this interaction enhances STX17 stability which in turn promotes autophagosome maturation. Interacts with RAB39A (GTP-bound); the interaction promotes autophagosome-lysosome membrane fusion driven by STX17-SNAP29-VAMP8. Interacts with RAB39B; the interaction may promote a different fonction in autophagy as compared with RAB39A. In terms of processing, dephosphorylation by PTPN2; regulates exit from the endoplasmic reticulum. Phosphorylated at Tyr-156 probably by ABL1.

It is found in the endoplasmic reticulum membrane. It localises to the smooth endoplasmic reticulum membrane. The protein localises to the endoplasmic reticulum-Golgi intermediate compartment membrane. Its subcellular location is the cytoplasmic vesicle. The protein resides in the autophagosome membrane. It is found in the COPII-coated vesicle membrane. It localises to the cytoplasm. The protein localises to the cytosol. Its subcellular location is the mitochondrion membrane. The protein resides in the autolysosome membrane. In terms of biological role, SNAREs, soluble N-ethylmaleimide-sensitive factor-attachment protein receptors, are essential proteins for fusion of cellular membranes. SNAREs localized on opposing membranes assemble to form a trans-SNARE complex, an extended, parallel four alpha-helical bundle that drives membrane fusion. STX17 is a SNARE of the autophagosome involved in autophagy through the direct control of autophagosome membrane fusion with the lysosome membrane. May also play a role in the early secretory pathway where it may maintain the architecture of the endoplasmic reticulum-Golgi intermediate compartment/ERGIC and Golgi and/or regulate transport between the endoplasmic reticulum, the ERGIC and the Golgi. This chain is Syntaxin-17, found in Mus musculus (Mouse).